A 462-amino-acid chain; its full sequence is ESX-1 secretion system protein EccE1 (462 aa).

The next 2 helical transmembrane spans lie at 9–29 and 34–54; these read FSTG…IAFL and WWAG…TFYG.

It belongs to the EccE family. In terms of assembly, part of the ESX-1 / type VII secretion system (T7SS), which is composed of cytosolic and membrane components. The ESX-1 membrane complex is composed of EccB1, EccCa1, EccCb1, EccD1 and EccE1.

The protein localises to the cell inner membrane. In terms of biological role, part of the ESX-1 specialized secretion system, which delivers several virulence factors to host cells during infection, including the key virulence factors EsxA (ESAT-6) and EsxB (CFP-10). This is ESX-1 secretion system protein EccE1 from Mycobacterium tuberculosis (strain CDC 1551 / Oshkosh).